The following is a 257-amino-acid chain: 6-phosphogluconolactonase (257 aa).

The residue at position 2 (A2) is an N-acetylalanine. The residue at position 49 (S49) is a Phosphoserine. Position 180 is an N6-acetyllysine (K180).

Belongs to the glucosamine/galactosamine-6-phosphate isomerase family. 6-phosphogluconolactonase subfamily.

The protein localises to the cytoplasm. It carries out the reaction 6-phospho-D-glucono-1,5-lactone + H2O = 6-phospho-D-gluconate + H(+). The protein operates within carbohydrate degradation; pentose phosphate pathway; D-ribulose 5-phosphate from D-glucose 6-phosphate (oxidative stage): step 2/3. Hydrolysis of 6-phosphogluconolactone to 6-phosphogluconate. The chain is 6-phosphogluconolactonase from Rattus norvegicus (Rat).